We begin with the raw amino-acid sequence, 584 residues long: Aspartate--tRNA(Asp/Asn) ligase (584 aa).

Glu-173 is a binding site for L-aspartate. The segment at 197–200 (QLFK) is aspartate. Arg-219 lines the L-aspartate pocket. ATP-binding positions include 219 to 221 (RDE) and Gln-228. His-447 lines the L-aspartate pocket. Position 477 (Glu-477) interacts with ATP. An L-aspartate-binding site is contributed by Arg-484. Residue 529–532 (GFDR) coordinates ATP.

It belongs to the class-II aminoacyl-tRNA synthetase family. Type 1 subfamily. Homodimer.

Its subcellular location is the cytoplasm. The catalysed reaction is tRNA(Asx) + L-aspartate + ATP = L-aspartyl-tRNA(Asx) + AMP + diphosphate. Its function is as follows. Aspartyl-tRNA synthetase with relaxed tRNA specificity since it is able to aspartylate not only its cognate tRNA(Asp) but also tRNA(Asn). Reaction proceeds in two steps: L-aspartate is first activated by ATP to form Asp-AMP and then transferred to the acceptor end of tRNA(Asp/Asn). The chain is Aspartate--tRNA(Asp/Asn) ligase from Campylobacter hominis (strain ATCC BAA-381 / DSM 21671 / CCUG 45161 / LMG 19568 / NCTC 13146 / CH001A).